The chain runs to 371 residues: tRNA-specific 2-thiouridylase MnmA (371 aa).

ATP-binding positions include 13-20 (GMSGGVDS) and Met39. The tract at residues 99–101 (NPD) is interaction with target base in tRNA. Cys104 functions as the Nucleophile in the catalytic mechanism. The cysteines at positions 104 and 200 are disulfide-linked. Gly128 contacts ATP. The interval 150–152 (KDQ) is interaction with tRNA. Residue Cys200 is the Cysteine persulfide intermediate of the active site. The interval 308 to 309 (RY) is interaction with tRNA.

Belongs to the MnmA/TRMU family.

The protein localises to the cytoplasm. It catalyses the reaction S-sulfanyl-L-cysteinyl-[protein] + uridine(34) in tRNA + AH2 + ATP = 2-thiouridine(34) in tRNA + L-cysteinyl-[protein] + A + AMP + diphosphate + H(+). Catalyzes the 2-thiolation of uridine at the wobble position (U34) of tRNA, leading to the formation of s(2)U34. The chain is tRNA-specific 2-thiouridylase MnmA from Listeria monocytogenes serotype 4a (strain HCC23).